The chain runs to 428 residues: Serine--tRNA ligase (428 aa).

Residue 231-233 (TAE) participates in L-serine binding. ATP is bound by residues 262-264 (RRE) and V278. E285 lines the L-serine pocket. 349–352 (EVSS) contributes to the ATP binding site. S384 is a binding site for L-serine.

Belongs to the class-II aminoacyl-tRNA synthetase family. Type-1 seryl-tRNA synthetase subfamily. In terms of assembly, homodimer. The tRNA molecule binds across the dimer.

The protein resides in the cytoplasm. It catalyses the reaction tRNA(Ser) + L-serine + ATP = L-seryl-tRNA(Ser) + AMP + diphosphate + H(+). It carries out the reaction tRNA(Sec) + L-serine + ATP = L-seryl-tRNA(Sec) + AMP + diphosphate + H(+). The protein operates within aminoacyl-tRNA biosynthesis; selenocysteinyl-tRNA(Sec) biosynthesis; L-seryl-tRNA(Sec) from L-serine and tRNA(Sec): step 1/1. In terms of biological role, catalyzes the attachment of serine to tRNA(Ser). Is also able to aminoacylate tRNA(Sec) with serine, to form the misacylated tRNA L-seryl-tRNA(Sec), which will be further converted into selenocysteinyl-tRNA(Sec). This chain is Serine--tRNA ligase, found in Chlamydia trachomatis serovar L2 (strain ATCC VR-902B / DSM 19102 / 434/Bu).